Reading from the N-terminus, the 692-residue chain is MARQFPLEKTRNIGIMAHIDAGKTTTTERILFYTGRVHKIGEVHDGAATMDWMVQEQERGITITSAATTAQWKGHRINIIDTPGHVDFTVEVERSLRVLDGAVAVFCSVGGVEPQSETVWRQADKYGVPRIAYINKMDRMGADFFRGVSMIADRLGANPVPIQIPIGAEDQFKGIIDLVTMKAMVYTDDLGTTSDTADIPGDLVDQANEYREKLLEAVADTDEELMMKYLEGEELTEEEIRNGIRKGTIGLKFIPVVCGSSFKNKGVQPLLDAVVEYMPAPTDVPNIKGVHPETGEADERHSSDKDPFSALAFKIMADPYVGKLAFFRVYSGVLSSGSYVYNSTKGKRERIGRILQMHANHREEIPEVYAGDIAAAVGLKDTTTGDTLCDDKAPIILESMQFPDPVINVAIEPKTKQDQEKMGTALARLAEEDPTFKMHTDQDSGQTIIEGMGELHLEIIVDRLQREFKVECNVGRPQVAYKETIRRAVKAEGKFVRQSGGRGQYGHCWIEIEPLEQGSGFEFVNKIVGGVIPREYIAPIGQGIEEAMQNGIQAGYPVMDIRATVYDGSYHDVDSSEMAFKIAGSMAFKAGAAKADPAIIEPVMKVEVTVPEEYMGEVIGDMNSRRGRIEGMEATGTAQIVRGFVPLSEMFGYATDLRSKTQGRGVYVMMFDHYEEVPKNIAEGIVAKRAGA.

Residues 8 to 282 enclose the tr-type G domain; that stretch reads EKTRNIGIMA…AVVEYMPAPT (275 aa). Residues 17–24, 81–85, and 135–138 contribute to the GTP site; these read AHIDAGKT, DTPGH, and NKMD. The tract at residues 285–304 is disordered; it reads PNIKGVHPETGEADERHSSD. Over residues 290-304 the composition is skewed to basic and acidic residues; the sequence is VHPETGEADERHSSD.

This sequence belongs to the TRAFAC class translation factor GTPase superfamily. Classic translation factor GTPase family. EF-G/EF-2 subfamily.

It is found in the cytoplasm. Catalyzes the GTP-dependent ribosomal translocation step during translation elongation. During this step, the ribosome changes from the pre-translocational (PRE) to the post-translocational (POST) state as the newly formed A-site-bound peptidyl-tRNA and P-site-bound deacylated tRNA move to the P and E sites, respectively. Catalyzes the coordinated movement of the two tRNA molecules, the mRNA and conformational changes in the ribosome. The sequence is that of Elongation factor G from Desulfitobacterium hafniense (strain Y51).